We begin with the raw amino-acid sequence, 140 residues long: Cysteine desulfuration protein SufE (140 aa).

Residue C51 is the Cysteine persulfide intermediate of the active site.

It belongs to the SufE family. As to quaternary structure, homodimer. Interacts with SufS.

It is found in the cytoplasm. The protein operates within cofactor biosynthesis; iron-sulfur cluster biosynthesis. Its function is as follows. Participates in cysteine desulfuration mediated by SufS. Cysteine desulfuration mobilizes sulfur from L-cysteine to yield L-alanine and constitutes an essential step in sulfur metabolism for biosynthesis of a variety of sulfur-containing biomolecules. Functions as a sulfur acceptor for SufS, by mediating the direct transfer of the sulfur atom from the S-sulfanylcysteine of SufS, an intermediate product of cysteine desulfuration process. This chain is Cysteine desulfuration protein SufE, found in Yersinia enterocolitica serotype O:8 / biotype 1B (strain NCTC 13174 / 8081).